A 343-amino-acid chain; its full sequence is Protein RecA (343 aa).

Residue 66 to 73 coordinates ATP; that stretch reads GPESSGKT.

It belongs to the RecA family.

The protein resides in the cytoplasm. Can catalyze the hydrolysis of ATP in the presence of single-stranded DNA, the ATP-dependent uptake of single-stranded DNA by duplex DNA, and the ATP-dependent hybridization of homologous single-stranded DNAs. It interacts with LexA causing its activation and leading to its autocatalytic cleavage. The protein is Protein RecA of Rickettsia bellii (strain OSU 85-389).